The primary structure comprises 591 residues: Aspartate--tRNA ligase (591 aa).

L-aspartate is bound at residue Glu175. The interval 199–202 (QLFK) is aspartate. Arg221 is an L-aspartate binding site. Residues 221–223 (RDE) and Gln230 contribute to the ATP site. Residue His449 participates in L-aspartate binding. Glu483 is an ATP binding site. Arg490 contacts L-aspartate. 535 to 538 (GLDR) contributes to the ATP binding site.

The protein belongs to the class-II aminoacyl-tRNA synthetase family. Type 1 subfamily. In terms of assembly, homodimer.

Its subcellular location is the cytoplasm. It catalyses the reaction tRNA(Asp) + L-aspartate + ATP = L-aspartyl-tRNA(Asp) + AMP + diphosphate. Catalyzes the attachment of L-aspartate to tRNA(Asp) in a two-step reaction: L-aspartate is first activated by ATP to form Asp-AMP and then transferred to the acceptor end of tRNA(Asp). This is Aspartate--tRNA ligase from Oceanobacillus iheyensis (strain DSM 14371 / CIP 107618 / JCM 11309 / KCTC 3954 / HTE831).